A 71-amino-acid polypeptide reads, in one-letter code: Vitellogenin-B2 (71 aa).

A signal peptide spans M1–C15. One can recognise a Vitellogenin domain in the interval F24–K71.

As to expression, produced by the liver, secreted into the blood and then sequestered by receptor mediated endocytosis into growing oocytes, where it is generally cleaved, giving rise to the respective yolk components.

In terms of biological role, precursor of the major egg-yolk proteins that are sources of nutrients during early development of oviparous organisms. This is Vitellogenin-B2 from Xenopus laevis (African clawed frog).